The following is a 217-amino-acid chain: tRNA (guanine-N(7)-)-methyltransferase (217 aa).

The S-adenosyl-L-methionine site is built by Glu-44, Glu-69, Asp-96, and Asp-118. Residue Asp-118 is part of the active site. Substrate contacts are provided by residues Lys-122, Asp-154, and 191 to 194 (TEYE).

Belongs to the class I-like SAM-binding methyltransferase superfamily. TrmB family.

The catalysed reaction is guanosine(46) in tRNA + S-adenosyl-L-methionine = N(7)-methylguanosine(46) in tRNA + S-adenosyl-L-homocysteine. It participates in tRNA modification; N(7)-methylguanine-tRNA biosynthesis. Its function is as follows. Catalyzes the formation of N(7)-methylguanine at position 46 (m7G46) in tRNA. This chain is tRNA (guanine-N(7)-)-methyltransferase, found in Bacillus cereus (strain G9842).